The primary structure comprises 1464 residues: Collagen alpha-1(I) chain (1464 aa).

The signal sequence occupies residues 1–22 (MFSFVDLRLLLLLAATALLTHG). The propeptide at 23–161 (QEEGQVEGQD…PPGLGGNFAP (139 aa)) is N-terminal propeptide. Residues 38–96 (ITCVQNGLRYHDRDVWKPEPCRICVCDNGKVLCDDVICDETKNCPGAEVPEGECCPVCP) enclose the VWFC domain. The segment at 98-1214 (GSESPTDQET…PQEKAHDGGR (1117 aa)) is disordered. Positions 138-153 (PGLPGPPGPPGPPGPP) are enriched in pro residues. Glutamine 162 is subject to Pyrrolidone carboxylic acid. Residues 162–178 (QLSYGYDEKSTGGISVP) are nonhelical region (N-terminal). An Allysine modification is found at lysine 170. A Phosphoserine modification is found at serine 171. Residues 179 to 1192 (GPMGPSGPRG…PGPPGPPGPP (1014 aa)) form a triple-helical region region. 4-hydroxyproline is present on residues proline 190, proline 193, proline 196, proline 205, proline 208, proline 211, proline 226, proline 241, proline 247, proline 256, and proline 262. Residues 198 to 217 (PQGFQGPPGEPGEPGASGPM) are compositionally biased toward low complexity. Over residues 229-243 (NGDDGEAGKPGRPGE) the composition is skewed to basic and acidic residues. Lysine 265 bears the 5-hydroxylysine; alternate mark. An O-linked (Gal...) hydroxylysine; alternate glycan is attached at lysine 265. A Phosphoserine modification is found at serine 271. The span at 279–295 (DAGPAGPKGEPGSPGEN) shows a compositional bias: low complexity. 4-hydroxyproline is present on residues proline 289, proline 292, proline 298, proline 307, and proline 313. Residues 318–331 (PAGARGNDGATGAA) show a composition bias toward low complexity. Residues 333 to 345 (PPGPTGPAGPPGF) show a composition bias toward pro residues. Proline 334, proline 343, proline 346, proline 373, proline 376, proline 388, proline 394, proline 403, proline 409, proline 412, and proline 427 each carry 4-hydroxyproline. A compositionally biased stretch (low complexity) spans 379-418 (AGAAGPAGNPGADGQPGAKGANGAPGIAGAPGFPGARGPS). 5-hydroxylysine is present on lysine 430. A 4-hydroxyproline mark is found at proline 436, proline 439, proline 451, proline 460, proline 475, proline 481, proline 490, and proline 496. Positions 448–457 (KGEPGPVGVQ) are enriched in low complexity. The segment covering 485–494 (GERGGPGSRG) has biased composition (gly residues). Position 505 is a 5-hydroxylysine (lysine 505). 4-hydroxyproline is present on residues proline 514, proline 523, proline 529, proline 535, proline 544, proline 547, proline 556, proline 565, proline 571, proline 583, proline 592, proline 601, proline 604, proline 622, proline 640, proline 646, proline 652, proline 658, proline 664, proline 670, proline 682, proline 691, proline 703, proline 715, proline 718, proline 724, proline 730, and proline 739. The segment covering 538–564 (KGLTGSPGSPGPDGKTGPPGPAGQDGR) has biased composition (low complexity). Residues 573 to 592 (ARGQAGVMGFPGPKGAAGEP) show a composition bias toward low complexity. The span at 634-661 (QGPAGSPGFQGLPGPAGPPGEAGKPGEQ) shows a compositional bias: low complexity. Low complexity predominate over residues 696–724 (PRGANGAPGNDGAKGDAGAPGAPGSQGAP). The Cell attachment site signature appears at 745–747 (RGD). Lysine 751 is subject to 5-hydroxylysine. Proline 757, proline 772, and proline 778 each carry 4-hydroxyproline. Residues 784–798 (SGPSGPAGPTGARGA) show a composition bias toward low complexity. Serine 787 carries the post-translational modification Phosphoserine. 4-hydroxyproline is present on residues proline 799, proline 805, proline 808, proline 817, proline 823, proline 841, proline 850, and proline 859. A compositionally biased stretch (low complexity) spans 811 to 838 (AGFAGPPGADGQPGAKGEPGDAGAKGDA). Positions 840-852 (PPGPAGPAGPPGP) are enriched in pro residues. Positions 853–883 (IGNVGAPGAKGARGSAGPPGATGFPGAAGRV) are enriched in low complexity. Lysine 862 is modified (5-hydroxylysine). 4-hydroxyproline occurs at positions 871 and 877. Proline 885 is modified (3-hydroxyproline). Proline 886, proline 895, proline 898, proline 919, proline 928, proline 937, proline 946, proline 964, proline 973, proline 976, proline 982, proline 997, proline 1003, proline 1009, proline 1018, and proline 1024 each carry 4-hydroxyproline. Low complexity predominate over residues 912–921 (ETGPAGRPGE). Low complexity predominate over residues 931–955 (AGEKGSPGADGPAGAPGTPGPQGIA). Residues 996–1006 (PPGPMGPPGLA) are compositionally biased toward pro residues. 5-hydroxylysine is present on lysine 1033. Positions 1042 to 1057 (AGPPGAPGAPGAPGPV) are enriched in pro residues. Residues proline 1045, proline 1048, and proline 1051 each carry the 4-hydroxyproline modification. A compositionally biased stretch (low complexity) spans 1078-1092 (VGPVGARGPAGPQGP). Residues 1093–1095 (RGD) carry the Cell attachment site motif. Residues 1093-1107 (RGDKGETGEQGDRGI) show a composition bias toward basic and acidic residues. Lysine 1096 is modified (5-hydroxylysine). A 5-hydroxylysine; alternate modification is found at lysine 1108. A glycan (O-linked (Gal...) hydroxylysine; alternate) is linked at lysine 1108. A 4-hydroxyproline mark is found at proline 1120, proline 1123, proline 1126, proline 1144, and proline 1159. Over residues 1126–1159 (PGEQGPSGASGPAGPRGPPGSAGAPGKDGLNGLP) the composition is skewed to low complexity. Proline 1164 carries the post-translational modification 3-hydroxyproline. Residue proline 1165 is modified to 4-hydroxyproline. Positions 1177 to 1192 (VGPPGPPGPPGPPGPP) are enriched in pro residues. Proline 1179 carries the 3-hydroxyproline modification. At proline 1180 the chain carries 4-hydroxyproline. At proline 1182 the chain carries 3-hydroxyproline. The residue at position 1183 (proline 1183) is a 4-hydroxyproline. A 3-hydroxyproline modification is found at proline 1185. Proline 1186, proline 1189, and proline 1192 each carry 4-hydroxyproline. Residues 1193-1218 (SAGFDFSFLPQPPQEKAHDGGRYYRA) form a nonhelical region (C-terminal) region. An Allysine modification is found at lysine 1208. A propeptide spans 1219–1464 (DDANVVRDRD…GFDVGPVCFL (246 aa)) (C-terminal propeptide). The Fibrillar collagen NC1 domain occupies 1229–1464 (LEVDTTLKSL…GFDVGPVCFL (236 aa)). 3 cysteine pairs are disulfide-bonded: cysteine 1259–cysteine 1291, cysteine 1299–cysteine 1462, and cysteine 1370–cysteine 1415. Aspartate 1277, asparagine 1279, glutamine 1280, cysteine 1282, and aspartate 1285 together coordinate Ca(2+). The N-linked (GlcNAc...) asparagine glycan is linked to asparagine 1365.

The protein belongs to the fibrillar collagen family. Trimers of one alpha 2(I) and two alpha 1(I) chains. Interacts with MRC2. Interacts with TRAM2. Interacts with MFAP4 in a Ca (2+)-dependent manner. In terms of processing, contains mostly 4-hydroxyproline. Proline residues at the third position of the tripeptide repeating unit (G-X-Y) are hydroxylated in some or all of the chains. Post-translationally, contains 3-hydroxyproline at a few sites. This modification occurs on the first proline residue in the sequence motif Gly-Pro-Hyp, where Hyp is 4-hydroxyproline. Lysine residues at the third position of the tripeptide repeating unit (G-X-Y) are 5-hydroxylated in some or all of the chains. In terms of processing, O-glycosylated on hydroxylated lysine residues. The O-linked glycan consists of a Glc-Gal disaccharide. Forms the fibrils of tendon, ligaments and bones. In bones the fibrils are mineralized with calcium hydroxyapatite.

It localises to the secreted. The protein localises to the extracellular space. It is found in the extracellular matrix. Its function is as follows. Type I collagen is a member of group I collagen (fibrillar forming collagen). The chain is Collagen alpha-1(I) chain (COL1A1) from Homo sapiens (Human).